A 156-amino-acid chain; its full sequence is Protein Smg homolog (156 aa).

Belongs to the Smg family.

The polypeptide is Protein Smg homolog (Halorhodospira halophila (strain DSM 244 / SL1) (Ectothiorhodospira halophila (strain DSM 244 / SL1))).